Reading from the N-terminus, the 376-residue chain is Homocitrate synthase (376 aa).

The Pyruvate carboxyltransferase domain maps to 4–259 (WKIIDSTLRE…RRKYKLEMLP (256 aa)). Arg-12 is a 2-oxoglutarate binding site. A Mg(2+)-binding site is contributed by Glu-13. His-72 is a binding site for 2-oxoglutarate. Residue Asp-92 participates in L-lysine binding. Arg-133 is a 2-oxoglutarate binding site. L-lysine contacts are provided by Ser-135 and Thr-166. Thr-166 contacts 2-oxoglutarate. 2 residues coordinate Mg(2+): His-195 and His-197. The active-site Proton acceptor is His-292.

The protein belongs to the alpha-IPM synthase/homocitrate synthase family. Homocitrate synthase LYS20/LYS21 subfamily. As to quaternary structure, exists in an equilibrium between monomer and homodimer. Mg(2+) is required as a cofactor. Mn(2+) serves as cofactor.

The protein localises to the cytoplasm. It carries out the reaction acetyl-CoA + 2-oxoglutarate + H2O = (2R)-homocitrate + CoA + H(+). The enzyme catalyses oxaloacetate + acetyl-CoA + H2O = citrate + CoA + H(+). It participates in amino-acid biosynthesis; L-lysine biosynthesis via AAA pathway; L-alpha-aminoadipate from 2-oxoglutarate: step 1/5. Its activity is regulated as follows. Is highly and competitively inhibited by lysine that binds to the active site and competes with 2-oxoglutarate. Is also slightly inhibited by arginine and 2-aminoethylcysteine. In terms of biological role, catalyzes the aldol-type condensation of 2-oxoglutarate with acetyl-CoA to yield homocitrate. Carries out the first step of the alpha-aminoadipate (AAA) lysine biosynthesis pathway. To a lesser extent, can also use oxaloacetate in place of 2-oxoglutarate, leading to citrate. Does not display 2-isopropylmalate synthase activity since it cannot use 2-oxoisovalerate. In Thermus thermophilus (strain ATCC BAA-163 / DSM 7039 / HB27), this protein is Homocitrate synthase.